The primary structure comprises 428 residues: GTPase Obg (428 aa).

Positions M1 to L158 constitute an Obg domain. The OBG-type G domain occupies A159–K331. GTP contacts are provided by residues G165–S172, F190–K194, D212–G215, N282–D285, and S312–A314. Residues S172 and T192 each coordinate Mg(2+). The OCT domain occupies M345–L428.

This sequence belongs to the TRAFAC class OBG-HflX-like GTPase superfamily. OBG GTPase family. As to quaternary structure, monomer. The cofactor is Mg(2+).

The protein localises to the cytoplasm. Functionally, an essential GTPase which binds GTP, GDP and possibly (p)ppGpp with moderate affinity, with high nucleotide exchange rates and a fairly low GTP hydrolysis rate. Plays a role in control of the cell cycle, stress response, ribosome biogenesis and in those bacteria that undergo differentiation, in morphogenesis control. This chain is GTPase Obg, found in Clostridium botulinum (strain Eklund 17B / Type B).